The following is a 386-amino-acid chain: Ethanolamine kinase 2 (386 aa).

Belongs to the choline/ethanolamine kinase family. As to expression, expressed in kidney, liver, ovary, testis and prostate.

It carries out the reaction ethanolamine + ATP = phosphoethanolamine + ADP + H(+). It functions in the pathway phospholipid metabolism; phosphatidylethanolamine biosynthesis; phosphatidylethanolamine from ethanolamine: step 1/3. Functionally, highly specific for ethanolamine phosphorylation. Does not have choline kinase activity. This is Ethanolamine kinase 2 (ETNK2) from Homo sapiens (Human).